A 458-amino-acid chain; its full sequence is Neuronal acetylcholine receptor subunit beta-3 (458 aa).

A signal peptide spans 1–21; the sequence is MLPDFMLVLIVLGIPSSATTG. The Extracellular segment spans residues 22–237; it reads FNSIAENEDA…VLRRLPLFYT (216 aa). Residues Asn51, Asn138, and Asn166 are each glycosylated (N-linked (GlcNAc...) asparagine). Cysteines 153 and 167 form a disulfide. The next 3 membrane-spanning stretches (helical) occupy residues 238 to 258, 267 to 287, and 300 to 320; these read LFLI…FYLP, LSTS…EIIP, and LLFI…VINV. Topologically, residues 321 to 428 are cytoplasmic; that stretch reads HHRSSSTYHP…WKFVAQVLDR (108 aa). A helical membrane pass occupies residues 429–449; sequence IFLWLFLIVSVTGSVLIFTPA.

The protein belongs to the ligand-gated ion channel (TC 1.A.9) family. Acetylcholine receptor (TC 1.A.9.1) subfamily. Beta-3/CHRNB3 sub-subfamily. As to quaternary structure, neuronal AChR seems to be composed of two different type of subunits: alpha and beta. CHRNB3/beta-3 subunit is only able to form functional nAChRs when co-assembled with another beta subunit. Participates in pentameric assemblies along with CHRNA4/alpha-4 and CHRNB2/beta-2 subunits and with CHRNA6/alpha-6 as well, forming stoichiometries such as (CHRNA3:CHRNB4)2:CHRNB3, (CHRNA4:CHRNB2)2:CHRNB3 or (CHRNA6:CHRNB2)2:CHRNB3.

The protein resides in the synaptic cell membrane. It is found in the cell membrane. The enzyme catalyses Ca(2+)(in) = Ca(2+)(out). It catalyses the reaction K(+)(in) = K(+)(out). It carries out the reaction Na(+)(in) = Na(+)(out). Activated by a myriad of ligands such as acetylcholine, cytisine, nicotine, choline and epibatidine. Its function is as follows. Component of neuronal acetylcholine receptors (nAChRs) that function as pentameric, ligand-gated cation channels with high calcium permeability among other activities. nAChRs are excitatory neurotrasnmitter receptors formed by a collection of nAChR subunits known to mediate synaptic transmission in the nervous system and the neuromuscular junction. Each nAchR subunit confers differential attributes to channel properties, including activation, deactivation and desensitization kinetics, pH sensitivity, cation permeability, and binding to allosteric modulators. Has an accessory rather than functional role and is only able to form functional nAChRs when co-assembled with another beta subunit. Participates in pentameric assemblies along with CHRNA3, CHRNA4, CHRNA6, CHRNB2 and CHRNB4. Modulates receptor assembly and increases receptor sensitivity to nicotine when associated with CHRNB2, CHRNA4 and/or CHRNA6 as well as CHRNA3 and CHRNB4. Seems to play a role in nicotine addiction. The polypeptide is Neuronal acetylcholine receptor subunit beta-3 (Homo sapiens (Human)).